Reading from the N-terminus, the 449-residue chain is Ribosomal protein uS12 methylthiotransferase RimO (449 aa).

Residues 15–125 (PRISFVSLGC…VLAAVHEAVP (111 aa)) enclose the MTTase N-terminal domain. [4Fe-4S] cluster is bound by residues Cys24, Cys60, Cys89, Cys156, Cys160, and Cys163. Residues 142–379 (LTPRHYAYLK…MRTQQKVSAR (238 aa)) enclose the Radical SAM core domain. A TRAM domain is found at 382-448 (KRKVGTRQSV…PYDLSGTAVG (67 aa)).

It belongs to the methylthiotransferase family. RimO subfamily. It depends on [4Fe-4S] cluster as a cofactor.

The protein resides in the cytoplasm. It catalyses the reaction L-aspartate(89)-[ribosomal protein uS12]-hydrogen + (sulfur carrier)-SH + AH2 + 2 S-adenosyl-L-methionine = 3-methylsulfanyl-L-aspartate(89)-[ribosomal protein uS12]-hydrogen + (sulfur carrier)-H + 5'-deoxyadenosine + L-methionine + A + S-adenosyl-L-homocysteine + 2 H(+). In terms of biological role, catalyzes the methylthiolation of an aspartic acid residue of ribosomal protein uS12. This chain is Ribosomal protein uS12 methylthiotransferase RimO, found in Xanthobacter autotrophicus (strain ATCC BAA-1158 / Py2).